Reading from the N-terminus, the 569-residue chain is Adenine deaminase (569 aa).

It belongs to the metallo-dependent hydrolases superfamily. Adenine deaminase family. It depends on Mn(2+) as a cofactor.

The catalysed reaction is adenine + H2O + H(+) = hypoxanthine + NH4(+). This is Adenine deaminase from Desulfatibacillum aliphaticivorans.